An 87-amino-acid polypeptide reads, in one-letter code: Small ribosomal subunit protein bS18 (87 aa).

A compositionally biased stretch (basic and acidic residues) spans 1–20 (MAGKSSGDRRKPIRKGKDGK). The disordered stretch occupies residues 1-24 (MAGKSSGDRRKPIRKGKDGKNAAP).

The protein belongs to the bacterial ribosomal protein bS18 family. Part of the 30S ribosomal subunit. Forms a tight heterodimer with protein bS6.

In terms of biological role, binds as a heterodimer with protein bS6 to the central domain of the 16S rRNA, where it helps stabilize the platform of the 30S subunit. The sequence is that of Small ribosomal subunit protein bS18 from Leifsonia xyli subsp. xyli (strain CTCB07).